The following is a 344-amino-acid chain: Phosphoribosylformylglycinamidine cyclo-ligase (344 aa).

The protein belongs to the AIR synthase family.

It localises to the cytoplasm. It catalyses the reaction 2-formamido-N(1)-(5-O-phospho-beta-D-ribosyl)acetamidine + ATP = 5-amino-1-(5-phospho-beta-D-ribosyl)imidazole + ADP + phosphate + H(+). The protein operates within purine metabolism; IMP biosynthesis via de novo pathway; 5-amino-1-(5-phospho-D-ribosyl)imidazole from N(2)-formyl-N(1)-(5-phospho-D-ribosyl)glycinamide: step 2/2. The polypeptide is Phosphoribosylformylglycinamidine cyclo-ligase (Haemophilus influenzae (strain 86-028NP)).